We begin with the raw amino-acid sequence, 784 residues long: Cas scaffolding protein family member 4 (784 aa).

The SH3 domain occupies 11–73 (PKALLARALY…PANRLQILEE (63 aa)). 5 positions are modified to phosphoserine: S197, S246, S302, S373, and S387. Positions 343-376 (TPNIYDVPRAMPDVPQAGKELGKAGGPSENSVDH) are disordered. A coiled-coil region spans residues 466 to 536 (RDSLEANIDA…LLETKERLES (71 aa)). Residues 614-635 (KEGESYQRKAPFQKQRASEQPP) form a disordered region.

The protein belongs to the CAS family. Interacts (via SH3 domain) with PTK2/FAK1 (via C-terminus). Post-translationally, phosphorylated on tyrosines by SRC.

It is found in the cytoplasm. It localises to the cytoskeleton. The protein resides in the cell junction. Its subcellular location is the focal adhesion. Functionally, docking protein that plays a role in tyrosine kinase-based signaling related to cell adhesion and cell spreading. Regulates PTK2/FAK1 activity, focal adhesion integrity, and cell spreading. This is Cas scaffolding protein family member 4 from Sus scrofa (Pig).